The sequence spans 213 residues: Imidazole glycerol phosphate synthase subunit HisH (213 aa).

Positions 8 to 213 constitute a Glutamine amidotransferase type-1 domain; that stretch reads TVALIDYGAG…FLSRFLDWNP (206 aa). Cys91 serves as the catalytic Nucleophile. Catalysis depends on residues His193 and Glu195.

In terms of assembly, heterodimer of HisH and HisF.

Its subcellular location is the cytoplasm. The enzyme catalyses 5-[(5-phospho-1-deoxy-D-ribulos-1-ylimino)methylamino]-1-(5-phospho-beta-D-ribosyl)imidazole-4-carboxamide + L-glutamine = D-erythro-1-(imidazol-4-yl)glycerol 3-phosphate + 5-amino-1-(5-phospho-beta-D-ribosyl)imidazole-4-carboxamide + L-glutamate + H(+). The catalysed reaction is L-glutamine + H2O = L-glutamate + NH4(+). The protein operates within amino-acid biosynthesis; L-histidine biosynthesis; L-histidine from 5-phospho-alpha-D-ribose 1-diphosphate: step 5/9. Functionally, IGPS catalyzes the conversion of PRFAR and glutamine to IGP, AICAR and glutamate. The HisH subunit catalyzes the hydrolysis of glutamine to glutamate and ammonia as part of the synthesis of IGP and AICAR. The resulting ammonia molecule is channeled to the active site of HisF. This chain is Imidazole glycerol phosphate synthase subunit HisH, found in Zymomonas mobilis subsp. mobilis (strain ATCC 31821 / ZM4 / CP4).